A 174-amino-acid polypeptide reads, in one-letter code: Flavodoxin (174 aa).

One can recognise a Flavodoxin-like domain in the interval 4–166; the sequence is IGIFFGSDTG…RIIQWTKKIK (163 aa).

Belongs to the flavodoxin family. FMN is required as a cofactor.

Its function is as follows. Low-potential electron donor to a number of redox enzymes. The protein is Flavodoxin (fldA) of Buchnera aphidicola subsp. Baizongia pistaciae (strain Bp).